We begin with the raw amino-acid sequence, 35 residues long: Kunitz-type proteinase inhibitor AEPI-III (35 aa).

The 32-residue stretch at 4–35 (CNLPAVVGRCKGYFPRYFYNTEAGKCQRFIYG) folds into the BPTI/Kunitz inhibitor domain.

It belongs to the venom Kunitz-type family. Sea anemone type 2 potassium channel toxin subfamily.

It is found in the secreted. It localises to the nematocyst. Functionally, dual-function toxin that inhibits both the serine protease trypsin and voltage-gated potassium channels (Kv). This Actinia equina (Beadlet anemone) protein is Kunitz-type proteinase inhibitor AEPI-III.